The chain runs to 2005 residues: Sodium channel protein type 2 subunit alpha (2005 aa).

Topologically, residues methionine 1–serine 129 are cytoplasmic. Phosphoserine is present on serine 4. The disordered stretch occupies residues arginine 28–serine 61. Lysine 38 participates in a covalent cross-link: Glycyl lysine isopeptide (Lys-Gly) (interchain with G-Cter in SUMO1). One copy of the I repeat lies at isoleucine 111–glutamine 456. Residues leucine 130–methionine 148 traverse the membrane as a helical segment. Topologically, residues serine 149–threonine 155 are extracellular. Residues lysine 156–alanine 176 form a helical membrane-spanning segment. Residues arginine 177–proline 190 lie on the Cytoplasmic side of the membrane. The helical transmembrane segment at tryptophan 191–valine 208 threads the bilayer. Residues asparagine 209–serine 214 are Extracellular-facing. N-linked (GlcNAc...) asparagine glycosylation occurs at asparagine 212. Residues alanine 215–isoleucine 231 form a helical membrane-spanning segment. At proline 232 to aspartate 250 the chain is on the cytoplasmic side. Residues valine 251–phenylalanine 270 form a helical membrane-spanning segment. Residues methionine 271–threonine 369 lie on the Extracellular side of the membrane. Residues cysteine 278 and cysteine 338 are joined by a disulfide bond. 6 N-linked (GlcNAc...) asparagine glycosylation sites follow: asparagine 285, asparagine 291, asparagine 297, asparagine 303, asparagine 308, and asparagine 340. An intramembrane region (pore-forming) is located at residues phenylalanine 370–leucine 394. Topologically, residues arginine 395–tyrosine 401 are extracellular. The helical transmembrane segment at methionine 402–alanine 422 threads the bilayer. At valine 423–proline 759 the chain is on the cytoplasmic side. Phosphoserine is present on residues serine 468, serine 471, serine 484, serine 526, serine 528, serine 531, serine 553, serine 554, and serine 558. A disordered region spans residues serine 494–glutamate 529. Over residues lysine 511 to glutamate 529 the composition is skewed to basic and acidic residues. Serine 554 is modified (phosphoserine; by PKC; in vitro). Residues serine 573 and serine 576 each carry the phosphoserine; by PKC; in vitro modification. Serine 589, serine 610, serine 623, serine 687, serine 688, and serine 721 each carry phosphoserine. The tract at residues asparagine 591–glycine 634 is disordered. Residues aspartate 596 to serine 610 show a composition bias toward basic and acidic residues. One copy of the II repeat lies at cysteine 741 to glycine 1013. The chain crosses the membrane as a helical span at residues phenylalanine 760–methionine 778. Residues glutamate 779–serine 789 lie on the Extracellular side of the membrane. A helical transmembrane segment spans residues valine 790–lysine 809. Residues isoleucine 810–tryptophan 823 are Cytoplasmic-facing. The chain crosses the membrane as a helical span at residues asparagine 824–valine 843. Residues glutamate 844 to glycine 845 lie on the Extracellular side of the membrane. Residues leucine 846–serine 863 form a helical membrane-spanning segment. Residues tryptophan 864–glycine 879 lie on the Cytoplasmic side of the membrane. Residues alanine 880–valine 898 traverse the membrane as a helical segment. The Extracellular segment spans residues glycine 899–histidine 927. Cysteine 912 and cysteine 918 are oxidised to a cystine. The binds SCN2B stretch occupies residues aspartate 917–cysteine 918. Positions phenylalanine 928–tryptophan 948 form an intramembrane region, pore-forming. Residues aspartate 949 to threonine 961 are Extracellular-facing. Cysteine 950 and cysteine 959 are disulfide-bonded. Residues valine 962–leucine 982 form a helical membrane-spanning segment. Over leucine 983–tryptophan 1209 the chain is Cytoplasmic. A disordered region spans residues glutamate 1120–glutamate 1166. The span at glutamate 1155 to glutamate 1166 shows a compositional bias: acidic residues. Residues lysine 1190–leucine 1504 form an III repeat. A helical transmembrane segment spans residues phenylalanine 1210–phenylalanine 1227. Topologically, residues glutamate 1228–threonine 1240 are extracellular. Residues methionine 1241–leucine 1259 traverse the membrane as a helical segment. Residues lysine 1260 to alanine 1273 are Cytoplasmic-facing. The chain crosses the membrane as a helical span at residues tryptophan 1274–asparagine 1292. Topologically, residues alanine 1293–glycine 1300 are extracellular. Residues alanine 1301–arginine 1319 form a helical membrane-spanning segment. The Cytoplasmic portion of the chain corresponds to phenylalanine 1320 to serine 1336. A helical transmembrane segment spans residues isoleucine 1337–valine 1356. Residues asparagine 1357–valine 1408 lie on the Extracellular side of the membrane. Cysteine 1366 and cysteine 1386 are disulfide-bonded. Residues asparagine 1368, asparagine 1382, and asparagine 1393 are each glycosylated (N-linked (GlcNAc...) asparagine). The pore-forming intramembrane region spans glycine 1409–alanine 1430. At alanine 1431–leucine 1447 the chain is on the extracellular side. A helical membrane pass occupies residues tyrosine 1448 to isoleucine 1469. Residues glycine 1470–valine 1532 are Cytoplasmic-facing. Serine 1506 is modified (phosphoserine; by PKC). The stretch at isoleucine 1513–glutamine 1811 is one IV repeat. The chain crosses the membrane as a helical span at residues phenylalanine 1533–valine 1550. At glutamate 1551 to asparagine 1561 the chain is on the extracellular side. Residues isoleucine 1562–leucine 1580 form a helical membrane-spanning segment. Over lysine 1581 to isoleucine 1592 the chain is Cytoplasmic. The helical transmembrane segment at glycine 1593–phenylalanine 1610 threads the bilayer. Residues leucine 1611 to threonine 1623 are Extracellular-facing. Residues leucine 1624 to isoleucine 1640 traverse the membrane as a helical segment. At lysine 1641 to alanine 1659 the chain is on the cytoplasmic side. Residues leucine 1660–phenylalanine 1677 traverse the membrane as a helical segment. Topologically, residues glycine 1678–threonine 1699 are extracellular. Residues phenylalanine 1700–proline 1722 constitute an intramembrane region (pore-forming). The Extracellular portion of the chain corresponds to isoleucine 1723–glycine 1752. A disulfide bridge links cysteine 1731 with cysteine 1746. Residues isoleucine 1753–isoleucine 1775 form a helical membrane-spanning segment. Residues leucine 1776–lysine 2005 are Cytoplasmic-facing. Positions glutamate 1905–lysine 1934 constitute an IQ domain. A Phosphoserine modification is found at serine 1930. Basic and acidic residues predominate over residues lysine 1933 to aspartate 1964. Residues lysine 1933–lysine 2005 are disordered. A phosphothreonine mark is found at threonine 1943, threonine 1963, and threonine 1966. Serine 1971 is subject to Phosphoserine. Positions threonine 1979 to lysine 2005 are enriched in basic and acidic residues.

This sequence belongs to the sodium channel (TC 1.A.1.10) family. Nav1.2/SCN2A subfamily. As to quaternary structure, heterooligomer of a large alpha subunit and a smaller beta subunit. Heterooligomer with SCN2B or SCN4B; disulfide-linked. Heterooligomer with SCN1B or SCN3B; non-covalently linked. Interacts with NEDD4L. Interacts with CALM. Interacts with TMEM233. Interacts with the conotoxin GVIIJ. Interacts with the scorpion toxin BMK M1. Post-translationally, may be ubiquitinated by NEDD4L; which would promote its endocytosis. In terms of processing, phosphorylation at Ser-1506 by PKC in a highly conserved cytoplasmic loop slows inactivation of the sodium channel and reduces peak sodium currents. Sumoylated at Lys-38. Sumoylation is induced by hypoxia, increases voltage-gated sodium current and mediates the early response to acute hypoxia in neurons. Sumoylated SCN2A is located at the cell membrane. In terms of tissue distribution, expressed in brain (at protein level). Expressed in cerebellar granule neurons (at protein level).

It localises to the cell membrane. The catalysed reaction is Na(+)(in) = Na(+)(out). Its function is as follows. Mediates the voltage-dependent sodium ion permeability of excitable membranes. Assuming opened or closed conformations in response to the voltage difference across the membrane, the protein forms a sodium-selective channel through which Na(+) ions may pass in accordance with their electrochemical gradient. Implicated in the regulation of hippocampal replay occurring within sharp wave ripples (SPW-R) important for memory. In Rattus norvegicus (Rat), this protein is Sodium channel protein type 2 subunit alpha.